Here is a 155-residue protein sequence, read N- to C-terminus: Deoxyuridine 5'-triphosphate nucleotidohydrolase (155 aa).

Substrate is bound by residues 75-77 (RSG), asparagine 88, and 92-94 (TVD).

It belongs to the dUTPase family. Mg(2+) is required as a cofactor.

It catalyses the reaction dUTP + H2O = dUMP + diphosphate + H(+). Its pathway is pyrimidine metabolism; dUMP biosynthesis; dUMP from dCTP (dUTP route): step 2/2. This enzyme is involved in nucleotide metabolism: it produces dUMP, the immediate precursor of thymidine nucleotides and it decreases the intracellular concentration of dUTP so that uracil cannot be incorporated into DNA. In Caulobacter vibrioides (strain ATCC 19089 / CIP 103742 / CB 15) (Caulobacter crescentus), this protein is Deoxyuridine 5'-triphosphate nucleotidohydrolase.